The primary structure comprises 443 residues: Threonine/serine transporter TdcC (443 aa).

Helical transmembrane passes span 22 to 42 (TTWT…FFPI), 44 to 64 (AGFG…PIAF), 97 to 117 (GVVI…IYGV), 140 to 160 (FVAL…KDLM), 163 to 183 (VMSF…LSLI), 207 to 227 (ILVT…FSPI), 259 to 279 (ASLL…FTLS), 319 to 339 (ASII…LGTL), 366 to 386 (ISMI…PNIL), 389 to 409 (IEAM…MFAI), and 423 to 443 (ENLF…YKLF).

It belongs to the amino acid/polyamine transporter 2 family. SdaC/TdcC subfamily.

Its subcellular location is the cell inner membrane. It catalyses the reaction L-threonine(in) + H(+)(in) = L-threonine(out) + H(+)(out). The enzyme catalyses L-serine(in) + H(+)(in) = L-serine(out) + H(+)(out). Functionally, involved in the import of threonine and serine into the cell, with the concomitant import of a proton (symport system). The polypeptide is Threonine/serine transporter TdcC (Enterobacter sp. (strain 638)).